The sequence spans 222 residues: Ribosomal RNA small subunit methyltransferase I (222 aa).

Belongs to the methyltransferase superfamily. RsmI family.

It localises to the cytoplasm. It catalyses the reaction cytidine(1402) in 16S rRNA + S-adenosyl-L-methionine = 2'-O-methylcytidine(1402) in 16S rRNA + S-adenosyl-L-homocysteine + H(+). Catalyzes the 2'-O-methylation of the ribose of cytidine 1402 (C1402) in 16S rRNA. This is Ribosomal RNA small subunit methyltransferase I from Thermotoga maritima (strain ATCC 43589 / DSM 3109 / JCM 10099 / NBRC 100826 / MSB8).